We begin with the raw amino-acid sequence, 203 residues long: Putative phosphoserine phosphatase 2 (203 aa).

Residue His9 is the Tele-phosphohistidine intermediate of the active site. His149 is a catalytic residue.

It belongs to the histidine phosphatase superfamily. Metal-independent phosphoserine phosphatase family. In terms of assembly, heterodimer with PspA. The PspB subunit appears to have no or considerably lower PSP activity compared with that of PspA.

It carries out the reaction O-phospho-L-serine + H2O = L-serine + phosphate. It catalyses the reaction O-phospho-D-serine + H2O = D-serine + phosphate. Its pathway is amino-acid biosynthesis; L-serine biosynthesis; L-serine from 3-phospho-D-glycerate: step 3/3. With respect to regulation, activity is not inhibited by EDTA in vitro, nor enhanced by the addition of Mg(2+). Part of a complex that catalyzes the dephosphorylation of L-phosphoserine to serine and inorganic phosphate. Is poorly or not active toward D-phosphoserine, DL-phosphothreonine, 3-phosphoglycerate, para-nitrophenylphosphate, and fructose-6-phosphate. Does not display phosphoglycerate mutase activity. The chain is Putative phosphoserine phosphatase 2 (pspB) from Hydrogenobacter thermophilus (strain DSM 6534 / IAM 12695 / TK-6).